Consider the following 123-residue polypeptide: 1,4-dihydroxy-2-naphthoyl-CoA hydrolase (123 aa).

E46 serves as the catalytic Nucleophile or proton acceptor.

It belongs to the thioesterase PaaI family.

It catalyses the reaction 1,4-dihydroxy-2-naphthoyl-CoA + H2O = 1,4-dihydroxy-2-naphthoate + CoA + H(+). Its pathway is quinol/quinone metabolism; menaquinone biosynthesis. Catalyzes the hydrolysis of 1,4-dihydroxy-2-naphthoyl-CoA (DHNA-CoA) to 1,4-dihydroxy-2-naphthoate (DHNA) and free coenzyme A. Production of DHNA is required for protection against bacteriolysis in the cytosol of macrophages and tissue-specific virulence in vivo, suggesting that MenI is required to protect the bacteria from killing in the macrophage cytosol. This chain is 1,4-dihydroxy-2-naphthoyl-CoA hydrolase, found in Listeria monocytogenes serotype 1/2a (strain 10403S).